Here is a 103-residue protein sequence, read N- to C-terminus: Large ribosomal subunit protein bL21 (103 aa).

The protein belongs to the bacterial ribosomal protein bL21 family. Part of the 50S ribosomal subunit. Contacts protein L20.

Its function is as follows. This protein binds to 23S rRNA in the presence of protein L20. The sequence is that of Large ribosomal subunit protein bL21 from Desulforudis audaxviator (strain MP104C).